The sequence spans 252 residues: Cytochrome c oxidase subunit 2 (252 aa).

Topologically, residues 1-39 (MFLIMLKGHILMDAPTPWGIFFQDSASPQMEGIMELHNN) are mitochondrial intermembrane. A helical membrane pass occupies residues 40–59 (IMFYLAIILFTVTWMMITII). The Mitochondrial matrix segment spans residues 60 to 81 (RNFVAKKSPIAHKYMNHGTLIE). The helical transmembrane segment at 82–105 (LIWTITPAFILILIAFPSFKLLYL) threads the bilayer. The Mitochondrial intermembrane segment spans residues 106–252 (MDEVMDPSLV…LLWLRDQMEG (147 aa)). Residues H184, C219, E221, C223, H227, and M230 each coordinate Cu cation. E221 is a Mg(2+) binding site.

It belongs to the cytochrome c oxidase subunit 2 family. Component of the cytochrome c oxidase (complex IV, CIV), a multisubunit enzyme composed of a catalytic core of 3 subunits and several supernumerary subunits. The complex exists as a monomer or a dimer and forms supercomplexes (SCs) in the inner mitochondrial membrane with ubiquinol-cytochrome c oxidoreductase (cytochrome b-c1 complex, complex III, CIII). It depends on Cu cation as a cofactor.

It localises to the mitochondrion inner membrane. The catalysed reaction is 4 Fe(II)-[cytochrome c] + O2 + 8 H(+)(in) = 4 Fe(III)-[cytochrome c] + 2 H2O + 4 H(+)(out). Component of the cytochrome c oxidase, the last enzyme in the mitochondrial electron transport chain which drives oxidative phosphorylation. The respiratory chain contains 3 multisubunit complexes succinate dehydrogenase (complex II, CII), ubiquinol-cytochrome c oxidoreductase (cytochrome b-c1 complex, complex III, CIII) and cytochrome c oxidase (complex IV, CIV), that cooperate to transfer electrons derived from NADH and succinate to molecular oxygen, creating an electrochemical gradient over the inner membrane that drives transmembrane transport and the ATP synthase. Cytochrome c oxidase is the component of the respiratory chain that catalyzes the reduction of oxygen to water. Electrons originating from reduced cytochrome c in the intermembrane space (IMS) are transferred via the dinuclear copper A center (CU(A)) of subunit 2 and heme A of subunit 1 to the active site in subunit 1, a binuclear center (BNC) formed by heme A3 and copper B (CU(B)). The BNC reduces molecular oxygen to 2 water molecules using 4 electrons from cytochrome c in the IMS and 4 protons from the mitochondrial matrix. This chain is Cytochrome c oxidase subunit 2 (cox2), found in Emericella nidulans (Aspergillus nidulans).